Consider the following 41-residue polypeptide: Ornatin-A2 (41 aa).

A Cell attachment site motif is present at residues 33–35; sequence RGD.

Belongs to the ornatin family.

The protein resides in the secreted. Potent inhibitor of fibrinogen interaction with platelet receptors expressed on glycoprotein IIb-IIIa complex. May prevent blood from clotting during either feeding and/or storage of ingested blood. This Placobdella ornata (Turtle leech) protein is Ornatin-A2.